Consider the following 314-residue polypeptide: Formate-nitrite transporter (314 aa).

Over 1–47 (MQKSTSKYVIDPISIKTNCSSEESYIRCVEYGKGKAHYRNLILLAKA) the chain is Cytoplasmic. The helical transmembrane segment at 48 to 68 (ILAGVFVGVCAHASGIAGGLF) threads the bilayer. Residues 69-77 (YYHKLREYV) lie on the Extracellular side of the membrane. The helical transmembrane segment at 78–98 (GISMSAFVYGFTFPIAFLCII) threads the bilayer. The Cytoplasmic portion of the chain corresponds to 99–128 (CTGSDLFTGNTLAVTTALLQKKLGLLCYMR). The helical transmembrane segment at 129 to 149 (VMCISLVGNYIGAVAFAFFVS) threads the bilayer. Residues 150-185 (YGSGAFSINTDTSKNHIFQFLNDIAIKKVSHSFIEC) are Extracellular-facing. The helical transmembrane segment at 186-206 (ICLAIGCNIFVCLAVYFVLSI) threads the bilayer. Residues 207-211 (KDGSG) are Cytoplasmic-facing. Residues 212 to 232 (LVFSVFFAVYAFAIAGYEHII) form a helical membrane-spanning segment. Residues 233 to 260 (ANIYTLNLALMISNDISFTQVYFKNLLP) lie on the Extracellular side of the membrane. The helical transmembrane segment at 261–281 (TLIGNYIAGGLVLAFPLFFIY) threads the bilayer. Residues 282 to 314 (RSCYYDYDKMNDELNTVVLKTLSLELQNESNHI) lie on the Cytoplasmic side of the membrane.

Belongs to the FNT transporter (TC 1.A.16) family. In terms of assembly, homopentamer.

It localises to the cell membrane. The protein resides in the vacuole membrane. It catalyses the reaction (S)-lactate(in) + H(+)(in) = (S)-lactate(out) + H(+)(out). The enzyme catalyses formate(in) + H(+)(in) = formate(out) + H(+)(out). It carries out the reaction pyruvate(out) + H(+)(out) = pyruvate(in) + H(+)(in). The catalysed reaction is acetate(out) + H(+)(out) = acetate(in) + H(+)(in). With respect to regulation, inhibited by the Malaria Box compound MMV007839 and its derivatives BH296 and BH267.meta. Monocarboxylate-proton symporter that mediates the efflux of the waste product lactate in the intraerythrocytic parasites; active in acidic-to-neutral pH range. Transports L-lactate. In Plasmodium malariae, this protein is Formate-nitrite transporter.